Consider the following 638-residue polypeptide: 1-deoxy-D-xylulose-5-phosphate synthase (638 aa).

Residues His79 and 120 to 122 each bind thiamine diphosphate; that span reads AHS. Asp151 is a Mg(2+) binding site. Thiamine diphosphate-binding positions include 152–153, Asn180, Tyr289, and Glu371; that span reads GA. Asn180 is a binding site for Mg(2+).

This sequence belongs to the transketolase family. DXPS subfamily. In terms of assembly, homodimer. Mg(2+) serves as cofactor. Thiamine diphosphate is required as a cofactor.

The catalysed reaction is D-glyceraldehyde 3-phosphate + pyruvate + H(+) = 1-deoxy-D-xylulose 5-phosphate + CO2. Its pathway is metabolic intermediate biosynthesis; 1-deoxy-D-xylulose 5-phosphate biosynthesis; 1-deoxy-D-xylulose 5-phosphate from D-glyceraldehyde 3-phosphate and pyruvate: step 1/1. Its function is as follows. Catalyzes the acyloin condensation reaction between C atoms 2 and 3 of pyruvate and glyceraldehyde 3-phosphate to yield 1-deoxy-D-xylulose-5-phosphate (DXP). The polypeptide is 1-deoxy-D-xylulose-5-phosphate synthase (Rhizobium etli (strain ATCC 51251 / DSM 11541 / JCM 21823 / NBRC 15573 / CFN 42)).